We begin with the raw amino-acid sequence, 140 residues long: MDRNINLPEEELKYIKECCEVLYLPQPTRMDIIGVMNDSDISWNENLIILMSEDGKIYVYDDEALYKVADTMEEFSEIGLINLGNEVYHCREDIKPLPEEDRDKDEYIMKIREKARQLIDNSQKDFEAILDSLENKHVSI.

This is an uncharacterized protein from Fowlpox virus (strain NVSL) (FPV).